The chain runs to 122 residues: uncharacterized protein (122 aa).

This is an uncharacterized protein from Methanothermobacter thermautotrophicus (Methanobacterium thermoformicicum).